The chain runs to 207 residues: Holliday junction resolvase RecU (207 aa).

Residues 1 to 21 (MTIRYPNGQVYRQPGPTKSKS) are disordered. 4 residues coordinate Mg(2+): Thr-87, Asp-89, Glu-102, and Gln-121.

The protein belongs to the RecU family. It depends on Mg(2+) as a cofactor.

Its subcellular location is the cytoplasm. It catalyses the reaction Endonucleolytic cleavage at a junction such as a reciprocal single-stranded crossover between two homologous DNA duplexes (Holliday junction).. In terms of biological role, endonuclease that resolves Holliday junction intermediates in genetic recombination. Cleaves mobile four-strand junctions by introducing symmetrical nicks in paired strands. Promotes annealing of linear ssDNA with homologous dsDNA. Required for DNA repair, homologous recombination and chromosome segregation. This Lactiplantibacillus plantarum (strain ATCC BAA-793 / NCIMB 8826 / WCFS1) (Lactobacillus plantarum) protein is Holliday junction resolvase RecU.